Here is a 270-residue protein sequence, read N- to C-terminus: ATP synthase subunit a (270 aa).

5 helical membrane-spanning segments follow: residues 37-57 (NVHIDSLFFSVLTGLIFLGVF), 98-118 (IAPLALTIFCWVFLMNLMDLV), 143-163 (DVNITMAMALGVFALMIYYSI), 208-228 (LFGNMFAGEVVFILCAAMLPW), and 239-259 (AIFHILVILIQSFVFMMLTIV).

Belongs to the ATPase A chain family. F-type ATPases have 2 components, CF(1) - the catalytic core - and CF(0) - the membrane proton channel. CF(1) has five subunits: alpha(3), beta(3), gamma(1), delta(1), epsilon(1). CF(0) has three main subunits: a(1), b(2) and c(9-12). The alpha and beta chains form an alternating ring which encloses part of the gamma chain. CF(1) is attached to CF(0) by a central stalk formed by the gamma and epsilon chains, while a peripheral stalk is formed by the delta and b chains.

The protein resides in the cell inner membrane. In terms of biological role, key component of the proton channel; it plays a direct role in the translocation of protons across the membrane. The polypeptide is ATP synthase subunit a (Vibrio cholerae serotype O1 (strain ATCC 39315 / El Tor Inaba N16961)).